The primary structure comprises 104 residues: Large ribosomal subunit protein bL21 (104 aa).

Belongs to the bacterial ribosomal protein bL21 family. Part of the 50S ribosomal subunit. Contacts protein L20.

This protein binds to 23S rRNA in the presence of protein L20. In Symbiobacterium thermophilum (strain DSM 24528 / JCM 14929 / IAM 14863 / T), this protein is Large ribosomal subunit protein bL21.